Here is a 90-residue protein sequence, read N- to C-terminus: Non-structural protein NS-S (90 aa).

A nucleolar signal region spans residues 4–29 (KLSLPGKNLKMQKRRWKPTRMMLTRA).

Belongs to the hantavirus NS-S protein family. In terms of assembly, interacts with host MAVS; this interaction may reduce MAVS ubiquitination.

The protein localises to the host cytoplasm. Its subcellular location is the host perinuclear region. It localises to the host nucleus. Functionally, antagonizes host type-I IFN signaling pathway. This chain is Non-structural protein NS-S (N), found in Homo sapiens (Human).